Here is a 201-residue protein sequence, read N- to C-terminus: Flavin prenyltransferase UbiX (201 aa).

Residues 23 to 25 (GAS), serine 49, 103 to 106 (SIKT), and arginine 138 each bind FMN. Tyrosine 168 and lysine 184 together coordinate dimethylallyl phosphate.

This sequence belongs to the UbiX/PAD1 family.

The enzyme catalyses dimethylallyl phosphate + FMNH2 = prenylated FMNH2 + phosphate. In terms of biological role, flavin prenyltransferase that catalyzes the synthesis of the prenylated FMN cofactor (prenyl-FMN) for 4-hydroxy-3-polyprenylbenzoic acid decarboxylase UbiD. The prenyltransferase is metal-independent and links a dimethylallyl moiety from dimethylallyl monophosphate (DMAP) to the flavin N5 and C6 atoms of FMN. This Saccharolobus solfataricus (strain ATCC 35092 / DSM 1617 / JCM 11322 / P2) (Sulfolobus solfataricus) protein is Flavin prenyltransferase UbiX.